Consider the following 364-residue polypeptide: Ribosomal RNA large subunit methyltransferase F (364 aa).

Residues 1-30 are disordered; sequence MTNKRKSAKPLEPAKRAPKPRTKKSRDLSA.

It belongs to the methyltransferase superfamily. METTL16/RlmF family.

Its subcellular location is the cytoplasm. The catalysed reaction is adenosine(1618) in 23S rRNA + S-adenosyl-L-methionine = N(6)-methyladenosine(1618) in 23S rRNA + S-adenosyl-L-homocysteine + H(+). Functionally, specifically methylates the adenine in position 1618 of 23S rRNA. This is Ribosomal RNA large subunit methyltransferase F from Vibrio vulnificus (strain CMCP6).